Reading from the N-terminus, the 391-residue chain is MTNNTKTITLNLGPQHPATHGVLRLILEMDGEVVNNADPHIGLLHRGTEKLIEHKTYLQAIPYFDRLDYVSPMCQEHAFALAVESLLECEVPRRAQFIRVLFSELTRILNHTLNIGSQALDIGATTPLLWLFEEREKIMEFYERVSGSRMHSNYFRPGGVAEDLPDGLLEDIDKFIEQFPPKLHDIESLLNENRLWKQRLVDIGVVSQKEAMDWGFSGPMLRGSGIAWDLRKSNPYDVYDEIDFKVPIGKNGDCYDRYFVRMLEMYESIKIIKQCIEKMPKGAVKTDDPKLTPPTRAKMKESMEAMIHHFKLYTEGYDVPAGETYKAVEAPKGEFGVYLYSQGGNRPYRCRIKAPGFAHLQGLDFISKGHLMADVITIIATLDIVFGEIDR.

Belongs to the complex I 49 kDa subunit family. As to quaternary structure, NDH-1 is composed of 14 different subunits. Subunits NuoB, C, D, E, F, and G constitute the peripheral sector of the complex.

The protein localises to the cell inner membrane. It carries out the reaction a quinone + NADH + 5 H(+)(in) = a quinol + NAD(+) + 4 H(+)(out). In terms of biological role, NDH-1 shuttles electrons from NADH, via FMN and iron-sulfur (Fe-S) centers, to quinones in the respiratory chain. The immediate electron acceptor for the enzyme in this species is believed to be ubiquinone. Couples the redox reaction to proton translocation (for every two electrons transferred, four hydrogen ions are translocated across the cytoplasmic membrane), and thus conserves the redox energy in a proton gradient. This is NADH-quinone oxidoreductase subunit D from Rickettsia felis (strain ATCC VR-1525 / URRWXCal2) (Rickettsia azadi).